The chain runs to 194 residues: Heme transporter hrg-1 (194 aa).

Transmembrane regions (helical) follow at residues 45–65 (QIWI…VFAI), 71–91 (IAVT…HLHL), 113–133 (GATV…VAGI), and 143–163 (LMGA…KWSA). The Di-leucine motif motif lies at 182–183 (LL).

This sequence belongs to the HRG family. As to expression, specifically expressed in the intestinal cells in larvae and adults.

The protein resides in the endosome membrane. It localises to the lysosome membrane. Its function is as follows. Heme transporter that regulates intracellular heme availability through the endosomal or lysosomal compartment. The chain is Heme transporter hrg-1 (hrg-1) from Caenorhabditis elegans.